The sequence spans 520 residues: Glutamyl-tRNA(Gln) amidotransferase subunit A (520 aa).

Residues K80 and S155 each act as charge relay system in the active site. S179 functions as the Acyl-ester intermediate in the catalytic mechanism.

The protein belongs to the amidase family. GatA subfamily. As to quaternary structure, heterotrimer of A, B and C subunits.

The catalysed reaction is L-glutamyl-tRNA(Gln) + L-glutamine + ATP + H2O = L-glutaminyl-tRNA(Gln) + L-glutamate + ADP + phosphate + H(+). Allows the formation of correctly charged Gln-tRNA(Gln) through the transamidation of misacylated Glu-tRNA(Gln) in organisms which lack glutaminyl-tRNA synthetase. The reaction takes place in the presence of glutamine and ATP through an activated gamma-phospho-Glu-tRNA(Gln). The polypeptide is Glutamyl-tRNA(Gln) amidotransferase subunit A (Renibacterium salmoninarum (strain ATCC 33209 / DSM 20767 / JCM 11484 / NBRC 15589 / NCIMB 2235)).